Here is a 343-residue protein sequence, read N- to C-terminus: Anthranilate 1,2-dioxygenase electron transfer component (343 aa).

The 2Fe-2S ferredoxin-type domain maps to 3-96 (HSVALNFADG…NAAFYFDHHS (94 aa)). The [2Fe-2S] cluster site is built by Cys-40, Cys-45, Cys-48, and Cys-80. The ferredoxin-reductase stretch occupies residues 98–338 (ICNAGETLKI…HIYSEKFLQS (241 aa)). Positions 103–206 (ETLKIATVVT…EAPLGSFYLR (104 aa)) constitute an FAD-binding FR-type domain.

Belongs to the bacterial ring-hydroxylating dioxygenase ferredoxin reductase family. In terms of assembly, monomer. It is part of the anthranilate dioxygenase two component enzyme system. The other component is an oxygenase component consisting of 3 large (AntA) and 3 small (AntB) subunits. It depends on FAD as a cofactor. [2Fe-2S] cluster is required as a cofactor.

The enzyme catalyses 2 reduced [2Fe-2S]-[ferredoxin] + NAD(+) + H(+) = 2 oxidized [2Fe-2S]-[ferredoxin] + NADH. The protein operates within aromatic compound metabolism; anthranilate degradation via hydroxylation; catechol from anthranilate: step 1/1. Functionally, electron transfer component of anthranilate 1,2-dioxygenase system. The sequence is that of Anthranilate 1,2-dioxygenase electron transfer component from Acinetobacter baylyi (strain ATCC 33305 / BD413 / ADP1).